The following is a 334-amino-acid chain: Anthranilate phosphoribosyltransferase (334 aa).

Residues Gly-79, 82-83, Ser-87, 89-92, 107-115, and Ser-119 contribute to the 5-phospho-alpha-D-ribose 1-diphosphate site; these read GD, NIST, and KHGNRSISS. Position 79 (Gly-79) interacts with anthranilate. Position 91 (Ser-91) interacts with Mg(2+). Position 110 (Asn-110) interacts with anthranilate. Residue Arg-165 coordinates anthranilate. Asp-224 and Glu-225 together coordinate Mg(2+).

The protein belongs to the anthranilate phosphoribosyltransferase family. In terms of assembly, homodimer. The cofactor is Mg(2+).

The catalysed reaction is N-(5-phospho-beta-D-ribosyl)anthranilate + diphosphate = 5-phospho-alpha-D-ribose 1-diphosphate + anthranilate. It participates in amino-acid biosynthesis; L-tryptophan biosynthesis; L-tryptophan from chorismate: step 2/5. Its function is as follows. Catalyzes the transfer of the phosphoribosyl group of 5-phosphorylribose-1-pyrophosphate (PRPP) to anthranilate to yield N-(5'-phosphoribosyl)-anthranilate (PRA). This is Anthranilate phosphoribosyltransferase from Streptococcus gordonii (strain Challis / ATCC 35105 / BCRC 15272 / CH1 / DL1 / V288).